A 393-amino-acid chain; its full sequence is tRNA(Met) cytidine acetate ligase (393 aa).

Residues Gly-81, Asn-142, and Arg-167 each coordinate ATP.

Belongs to the TmcAL family.

Its subcellular location is the cytoplasm. It carries out the reaction cytidine(34) in elongator tRNA(Met) + acetate + ATP = N(4)-acetylcytidine(34) in elongator tRNA(Met) + AMP + diphosphate. Catalyzes the formation of N(4)-acetylcytidine (ac(4)C) at the wobble position of elongator tRNA(Met), using acetate and ATP as substrates. First activates an acetate ion to form acetyladenylate (Ac-AMP) and then transfers the acetyl group to tRNA to form ac(4)C34. The sequence is that of tRNA(Met) cytidine acetate ligase from Bacillus cereus (strain AH187).